The chain runs to 72 residues: Mitotic-spindle organizing protein 1 (72 aa).

Belongs to the MOZART1 family. As to quaternary structure, part of the gamma-tubulin complex.

It localises to the cytoplasm. The protein localises to the cytoskeleton. Its subcellular location is the microtubule organizing center. It is found in the centrosome. The protein resides in the spindle. Functionally, required for gamma-tubulin complex recruitment to the centrosome. In Xenopus tropicalis (Western clawed frog), this protein is Mitotic-spindle organizing protein 1 (mzt1).